Reading from the N-terminus, the 249-residue chain is Secretion system apparatus lipoprotein SsaJ (249 aa).

A signal peptide spans 1–18; sequence MKVHRIVFLTVLTFFLTA. Cys19 is lipidated: N-palmitoyl cysteine. Cys19 carries S-diacylglycerol cysteine lipidation. The helical transmembrane segment at 225 to 245 threads the bilayer; the sequence is LMLSLTGLLLGVGILIGYFCL.

The protein belongs to the YscJ lipoprotein family.

It is found in the cell outer membrane. Component of Salmonella pathogenicity island 2 (SPI-2) type III secretion system, required for secretion of some type III-secreted effectors including the SpvB exotoxin. In Salmonella typhimurium (strain 14028s / SGSC 2262), this protein is Secretion system apparatus lipoprotein SsaJ (ssaJ).